The primary structure comprises 71 residues: ATP synthase F(0) complex subunit e, mitochondrial (71 aa).

K34 carries the N6-acetyllysine modification.

The protein belongs to the ATPase e subunit family. Component of the ATP synthase complex composed at least of ATP5F1A/subunit alpha, ATP5F1B/subunit beta, ATP5MC1/subunit c (homooctomer), MT-ATP6/subunit a, MT-ATP8/subunit 8, ATP5ME/subunit e, ATP5MF/subunit f, ATP5MG/subunit g, ATP5MK/subunit k, ATP5MJ/subunit j, ATP5F1C/subunit gamma, ATP5F1D/subunit delta, ATP5F1E/subunit epsilon, ATP5PF/subunit F6, ATP5PB/subunit b, ATP5PD/subunit d, ATP5PO/subunit OSCP. ATP synthase complex consists of a soluble F(1) head domain (subunits alpha(3) and beta(3)) - the catalytic core - and a membrane F(0) domain - the membrane proton channel (subunits c, a, 8, e, f, g, k and j). These two domains are linked by a central stalk (subunits gamma, delta, and epsilon) rotating inside the F1 region and a stationary peripheral stalk (subunits F6, b, d, and OSCP).

The protein localises to the mitochondrion. It localises to the mitochondrion inner membrane. In terms of biological role, subunit e, of the mitochondrial membrane ATP synthase complex (F(1)F(0) ATP synthase or Complex V) that produces ATP from ADP in the presence of a proton gradient across the membrane which is generated by electron transport complexes of the respiratory chain. ATP synthase complex consist of a soluble F(1) head domain - the catalytic core - and a membrane F(1) domain - the membrane proton channel. These two domains are linked by a central stalk rotating inside the F(1) region and a stationary peripheral stalk. During catalysis, ATP synthesis in the catalytic domain of F(1) is coupled via a rotary mechanism of the central stalk subunits to proton translocation. In vivo, can only synthesize ATP although its ATP hydrolase activity can be activated artificially in vitro. Part of the complex F(0) domain. The chain is ATP synthase F(0) complex subunit e, mitochondrial from Bos taurus (Bovine).